Consider the following 74-residue polypeptide: Large ribosomal subunit protein bL31 (74 aa).

Residues C16, C18, C37, and C40 each coordinate Zn(2+).

The protein belongs to the bacterial ribosomal protein bL31 family. Type A subfamily. In terms of assembly, part of the 50S ribosomal subunit. The cofactor is Zn(2+).

Functionally, binds the 23S rRNA. This is Large ribosomal subunit protein bL31 from Nitrosomonas europaea (strain ATCC 19718 / CIP 103999 / KCTC 2705 / NBRC 14298).